The primary structure comprises 343 residues: Programmed cell death protein 2 (343 aa).

Zn(2+)-binding residues include Cys134, Cys137, Cys145, Cys148, Cys154, His158, His167, and Cys171. An MYND-type; atypical zinc finger spans residues 134–171 (CRVCGCLAPMTCSRCKQAHYCSKEHQTLDWQLGHKQAC).

Post-translationally, ubiquitinated by PRKN, promoting proteasomal degradation.

The protein resides in the nucleus. Functionally, may be a DNA-binding protein with a regulatory function. May play an important role in cell death and/or in regulation of cell proliferation. The polypeptide is Programmed cell death protein 2 (Pdcd2) (Rattus norvegicus (Rat)).